The following is a 475-amino-acid chain: Putative aldehyde dehydrogenase SERP1729 (475 aa).

201–207 (GDGSGVG) serves as a coordination point for NAD(+). Residues Glu-245 and Cys-279 contribute to the active site.

Belongs to the aldehyde dehydrogenase family.

The enzyme catalyses an aldehyde + NAD(+) + H2O = a carboxylate + NADH + 2 H(+). The protein is Putative aldehyde dehydrogenase SERP1729 of Staphylococcus epidermidis (strain ATCC 35984 / DSM 28319 / BCRC 17069 / CCUG 31568 / BM 3577 / RP62A).